The sequence spans 98 residues: NADH-ubiquinone oxidoreductase chain 4L (98 aa).

3 helical membrane-spanning segments follow: residues Met1–Ile21, Thr29–Leu49, and Leu59–Val79.

The protein belongs to the complex I subunit 4L family. In terms of assembly, core subunit of respiratory chain NADH dehydrogenase (Complex I) which is composed of 45 different subunits.

Its subcellular location is the mitochondrion inner membrane. It catalyses the reaction a ubiquinone + NADH + 5 H(+)(in) = a ubiquinol + NAD(+) + 4 H(+)(out). Core subunit of the mitochondrial membrane respiratory chain NADH dehydrogenase (Complex I) which catalyzes electron transfer from NADH through the respiratory chain, using ubiquinone as an electron acceptor. Part of the enzyme membrane arm which is embedded in the lipid bilayer and involved in proton translocation. This chain is NADH-ubiquinone oxidoreductase chain 4L (MT-ND4L), found in Ornithorhynchus anatinus (Duckbill platypus).